The following is a 162-amino-acid chain: Ribosomal RNA large subunit methyltransferase H (162 aa).

Glycine 108 lines the S-adenosyl-L-methionine pocket.

It belongs to the RNA methyltransferase RlmH family. As to quaternary structure, homodimer.

The protein localises to the cytoplasm. It catalyses the reaction pseudouridine(1915) in 23S rRNA + S-adenosyl-L-methionine = N(3)-methylpseudouridine(1915) in 23S rRNA + S-adenosyl-L-homocysteine + H(+). Functionally, specifically methylates the pseudouridine at position 1915 (m3Psi1915) in 23S rRNA. The chain is Ribosomal RNA large subunit methyltransferase H from Methylobacterium sp. (strain 4-46).